We begin with the raw amino-acid sequence, 176 residues long: Endoribonuclease YbeY (176 aa).

Histidine 138, histidine 142, and histidine 148 together coordinate Zn(2+).

The protein belongs to the endoribonuclease YbeY family. The cofactor is Zn(2+).

The protein localises to the cytoplasm. In terms of biological role, single strand-specific metallo-endoribonuclease involved in late-stage 70S ribosome quality control and in maturation of the 3' terminus of the 16S rRNA. This chain is Endoribonuclease YbeY, found in Trichormus variabilis (strain ATCC 29413 / PCC 7937) (Anabaena variabilis).